Reading from the N-terminus, the 375-residue chain is Protein MGF 360-5L (375 aa).

The protein belongs to the asfivirus MGF 360 family.

Plays a role in virus cell tropism, and may be required for efficient virus replication in macrophages. This is Protein MGF 360-5L from African swine fever virus (isolate Portugal/Lis 57/1957) (ASFV).